The following is a 634-amino-acid chain: Threonine--tRNA ligase (634 aa).

The region spanning 1-61 (MINITLPDGS…DHDASLRIIT (61 aa)) is the TGS domain. The tract at residues 243-534 (DHRRIGKAQD…LIEHHAGAFP (292 aa)) is catalytic. Zn(2+) contacts are provided by Cys334, His385, and His511.

The protein belongs to the class-II aminoacyl-tRNA synthetase family. In terms of assembly, homodimer. Zn(2+) serves as cofactor.

It localises to the cytoplasm. The enzyme catalyses tRNA(Thr) + L-threonine + ATP = L-threonyl-tRNA(Thr) + AMP + diphosphate + H(+). Catalyzes the attachment of threonine to tRNA(Thr) in a two-step reaction: L-threonine is first activated by ATP to form Thr-AMP and then transferred to the acceptor end of tRNA(Thr). Also edits incorrectly charged L-seryl-tRNA(Thr). The protein is Threonine--tRNA ligase of Xanthomonas euvesicatoria pv. vesicatoria (strain 85-10) (Xanthomonas campestris pv. vesicatoria).